The sequence spans 213 residues: Inactive ribonuclease-like protein 10 (213 aa).

Positions 1-24 are cleaved as a signal peptide; the sequence is MKLTLVQFFFMMLLLLLGLGVGLG. N-linked (GlcNAc...) asparagine glycosylation is present at asparagine 128.

The protein belongs to the pancreatic ribonuclease family. In terms of processing, the N-terminus is blocked. Glycosylated. Male-specific expression in proximal caput of the epididymis.

The protein resides in the secreted. Functionally, secreted proximal epididymal protein required for post-testicular sperm maturation and male fertility. May be involved in sperm adhesion to the egg zona pellucida. Does not have ribonuclease activity. In Sus scrofa (Pig), this protein is Inactive ribonuclease-like protein 10 (RNASE10).